We begin with the raw amino-acid sequence, 517 residues long: MKVACIGAGPGGLFFATLLKRSRPDAEVVVFERNRPDDTFGFGVVFSDATLDAIDAADPVLSEALEKHGRHWDDIEVRVHGERERVGGMGMAAVVRKTLLSLLQERARAEGVQMRFQDEVRDPAELDDFDLVVVCDGANSRFRTLFADDFGPTAEVASAKFIWFGTTYMFDGLTFVHQDGPHGVFAAHAYPISDSLSTFIVETDADSWARAGLDAFDPATPLGMSDEKTKSYLEDLFRAQIDGHPLVGNNSRWANFATRRARSWRSGKWVLLGDAAHTAHFSVGSGTKMAMEDAVALAETLGEASRSVPEALDLYEERRRPKVERIQNSARPSLSWWEHFGRYVRSFDAPTQFAFHFLTRSIPRGKLAVRDAAYVDRVDGWWLRHHEAGPLKTPFRVGPYRLPTRRVTVGDDLLTGTDGTGIPMVPFSGQPFGAGVWIDAPDTEEGLPLALDQVRETAEAGVLLVGVRGGTALTRVLVAEEARLAHSLPAAIVGAYDDDTATTLVLSGRADLVGGTK.

Belongs to the aromatic-ring hydroxylase family. KMO subfamily.

The catalysed reaction is 2-hydroxybenzoyl-CoA + NADH + O2 + H(+) = 2,5-dihydroxybenzoyl-CoA + NAD(+) + H2O. Its function is as follows. Involved in the degradation of salicylate via a pathway involving coenzyme A derivative. Catalyzes the aromatic hydroxylation of salicylyl-CoA to yield gentisyl-CoA. This chain is Salicyloyl-CoA 5-hydroxylase, found in Streptomyces sp.